Here is a 380-residue protein sequence, read N- to C-terminus: GTP-binding protein 10 (380 aa).

Residues 13 to 148 (GNFVDNVRLY…RNIRLDLKLI (136 aa)) form the Obg domain. The region spanning 149–344 (ADFGLVGFPN…LKSLIRQSLE (196 aa)) is the OBG-type G domain. Residues 155-162 (GFPNAGKS), 202-206 (DLPGL), and 278-281 (NKMD) contribute to the GTP site.

The protein belongs to the TRAFAC class OBG-HflX-like GTPase superfamily. OBG GTPase family.

The protein localises to the nucleus. It localises to the nucleolus. In terms of biological role, may be involved in the ribosome maturation process. The protein is GTP-binding protein 10 (gtpbp10) of Danio rerio (Zebrafish).